Consider the following 193-residue polypeptide: dCTP deaminase (193 aa).

DCTP-binding positions include 110 to 115, Asp-128, 136 to 138, Tyr-171, Lys-178, and Gln-182; these read RSSLAR and VLE. The Proton donor/acceptor role is filled by Glu-138. The tract at residues 169-193 is disordered; it reads RPYNSRQDAKYRGQQGAVASRIDKD.

It belongs to the dCTP deaminase family. Homotrimer.

The catalysed reaction is dCTP + H2O + H(+) = dUTP + NH4(+). It participates in pyrimidine metabolism; dUMP biosynthesis; dUMP from dCTP (dUTP route): step 1/2. Its function is as follows. Catalyzes the deamination of dCTP to dUTP. This Yersinia pestis bv. Antiqua (strain Antiqua) protein is dCTP deaminase.